A 525-amino-acid polypeptide reads, in one-letter code: ADP-ribosylation factor GTPase-activating protein 3 (525 aa).

An Arf-GAP domain is found at 10–126 (LAIFKRLRSV…IKTLATQATR (117 aa)). A C4-type zinc finger spans residues 25–48 (CFDCGAKNPSWASISYGVFLCIDC). The segment at 160 to 233 (VSGATQASAQ…KGLGAKKGSL (74 aa)) is disordered. A compositionally biased stretch (polar residues) spans 162–177 (GATQASAQPEPASSTP). The segment covering 222 to 233 (AKKGLGAKKGSL) has biased composition (low complexity). Phosphoserine is present on residues Ser232, Ser242, Ser271, and Ser275. The interval 249 to 271 (QAQAVDKRKEQEDLARGTPKEES) is disordered. Residues 293 to 305 (LNLSGQKKAEAER) are compositionally biased toward basic and acidic residues. Disordered regions lie at residues 293–364 (LNLS…SSSR) and 377–428 (FSSW…EAQK). The segment covering 319-333 (HSVTSDMQTIEQESP) has biased composition (polar residues). Ser332 is subject to Phosphoserine. The span at 349-363 (SYFSSSSKWSEQSSS) shows a compositional bias: low complexity. A Phosphoserine modification is found at Ser379. A compositionally biased stretch (basic and acidic residues) spans 387–398 (YWKKDSSRDPEP). Residues Ser437, Ser460, Ser462, Ser464, Ser466, and Ser467 each carry the phosphoserine modification.

It is found in the cytoplasm. Its subcellular location is the golgi apparatus membrane. With respect to regulation, GAP activity stimulated by phosphatidylinositol 4,5-bisphosphate (PIP2). Its function is as follows. GTPase-activating protein (GAP) for ADP ribosylation factor 1 (ARF1). Hydrolysis of ARF1-bound GTP may lead to dissociation of coatomer from Golgi-derived membranes to allow fusion with target membranes. The polypeptide is ADP-ribosylation factor GTPase-activating protein 3 (Rattus norvegicus (Rat)).